A 205-amino-acid polypeptide reads, in one-letter code: uncharacterized protein (205 aa).

The HTH tetR-type domain occupies 11–71; the sequence is KTRRALVDAA…EMVDEAGLML (61 aa).

This is an uncharacterized protein from Haemophilus influenzae (strain ATCC 51907 / DSM 11121 / KW20 / Rd).